Consider the following 239-residue polypeptide: Purine nucleoside phosphorylase DeoD-type (239 aa).

H5 contributes to the a purine D-ribonucleoside binding site. Residues G21, R25, R44, and 88–91 contribute to the phosphate site; that span reads RVGS. A purine D-ribonucleoside-binding positions include 180-182 and 204-205; these read EME and SD. Residue D205 is the Proton donor of the active site.

Belongs to the PNP/UDP phosphorylase family. Homohexamer; trimer of homodimers.

It carries out the reaction a purine D-ribonucleoside + phosphate = a purine nucleobase + alpha-D-ribose 1-phosphate. It catalyses the reaction a purine 2'-deoxy-D-ribonucleoside + phosphate = a purine nucleobase + 2-deoxy-alpha-D-ribose 1-phosphate. Its function is as follows. Catalyzes the reversible phosphorolytic breakdown of the N-glycosidic bond in the beta-(deoxy)ribonucleoside molecules, with the formation of the corresponding free purine bases and pentose-1-phosphate. The polypeptide is Purine nucleoside phosphorylase DeoD-type (Klebsiella pneumoniae (strain 342)).